We begin with the raw amino-acid sequence, 1072 residues long: DNA-directed RNA polymerase subunit beta (1072 aa).

The protein belongs to the RNA polymerase beta chain family. In terms of assembly, in plastids the minimal PEP RNA polymerase catalytic core is composed of four subunits: alpha, beta, beta', and beta''. When a (nuclear-encoded) sigma factor is associated with the core the holoenzyme is formed, which can initiate transcription.

It is found in the plastid. It localises to the chloroplast. It catalyses the reaction RNA(n) + a ribonucleoside 5'-triphosphate = RNA(n+1) + diphosphate. DNA-dependent RNA polymerase catalyzes the transcription of DNA into RNA using the four ribonucleoside triphosphates as substrates. In Barbarea verna (Land cress), this protein is DNA-directed RNA polymerase subunit beta.